Consider the following 160-residue polypeptide: Cytochrome b6-f complex subunit 4 (160 aa).

The next 3 helical transmembrane spans lie at 36–56, 95–115, and 131–151; these read LLYVFPVCILGTFACCIGLAV, LLGVLAMARVPAGLITVPFIE, and LVFILGFFTAVWLGIGACLPI.

It belongs to the cytochrome b family. PetD subfamily. In terms of assembly, the 4 large subunits of the cytochrome b6-f complex are cytochrome b6, subunit IV (17 kDa polypeptide, petD), cytochrome f and the Rieske protein, while the 4 small subunits are petG, petL, petM and petN. The complex functions as a dimer.

The protein localises to the plastid. It localises to the chloroplast thylakoid membrane. Component of the cytochrome b6-f complex, which mediates electron transfer between photosystem II (PSII) and photosystem I (PSI), cyclic electron flow around PSI, and state transitions. The protein is Cytochrome b6-f complex subunit 4 of Trieres chinensis (Marine centric diatom).